The primary structure comprises 270 residues: Phosphatidylglycerol--prolipoprotein diacylglyceryl transferase (270 aa).

The next 4 membrane-spanning stretches (helical) occupy residues 19 to 39 (FPVY…LWLA), 56 to 76 (LVLI…VIFE), 92 to 112 (QGGL…ILFA), and 116 to 136 (GVSF…GQAI). Arg138 serves as a coordination point for a 1,2-diacyl-sn-glycero-3-phospho-(1'-sn-glycerol). 3 consecutive transmembrane segments (helical) span residues 178–198 (HPTF…LLAL), 206–226 (GELF…VEGL), and 236–256 (LRIA…FIIV).

This sequence belongs to the Lgt family.

It is found in the cell membrane. It carries out the reaction L-cysteinyl-[prolipoprotein] + a 1,2-diacyl-sn-glycero-3-phospho-(1'-sn-glycerol) = an S-1,2-diacyl-sn-glyceryl-L-cysteinyl-[prolipoprotein] + sn-glycerol 1-phosphate + H(+). It participates in protein modification; lipoprotein biosynthesis (diacylglyceryl transfer). Catalyzes the transfer of the diacylglyceryl group from phosphatidylglycerol to the sulfhydryl group of the N-terminal cysteine of a prolipoprotein, the first step in the formation of mature lipoproteins. This Bacillus anthracis (strain A0248) protein is Phosphatidylglycerol--prolipoprotein diacylglyceryl transferase.